The chain runs to 130 residues: Small ribosomal subunit protein uS9 (130 aa).

This sequence belongs to the universal ribosomal protein uS9 family. As to quaternary structure, part of the 30S ribosomal subunit.

The sequence is that of Small ribosomal subunit protein uS9 (rpsI) from Bacillus subtilis (strain 168).